The chain runs to 456 residues: Bifunctional protein GlmU (456 aa).

Residues 1–229 (MLNSAMSVVI…ISETDGVNNR (229 aa)) form a pyrophosphorylase region. UDP-N-acetyl-alpha-D-glucosamine contacts are provided by residues 11 to 14 (LAAG), Lys25, Gln76, 81 to 82 (GT), 103 to 105 (YGD), Gly140, Glu154, Asn169, and Asn227. Residue Asp105 coordinates Mg(2+). Asn227 is a binding site for Mg(2+). A linker region spans residues 230-250 (LQLSRLERIYQAEQAEKLLLS). The N-acetyltransferase stretch occupies residues 251–456 (GVMLRDPARF…QGWQRPVKKK (206 aa)). Residues Arg333 and Lys351 each contribute to the UDP-N-acetyl-alpha-D-glucosamine site. The Proton acceptor role is filled by His363. Residues Tyr366 and Asn377 each contribute to the UDP-N-acetyl-alpha-D-glucosamine site. Acetyl-CoA contacts are provided by residues Ala380, 386–387 (NY), Ser405, Ala423, and Arg440.

This sequence in the N-terminal section; belongs to the N-acetylglucosamine-1-phosphate uridyltransferase family. It in the C-terminal section; belongs to the transferase hexapeptide repeat family. As to quaternary structure, homotrimer. Mg(2+) is required as a cofactor.

Its subcellular location is the cytoplasm. It carries out the reaction alpha-D-glucosamine 1-phosphate + acetyl-CoA = N-acetyl-alpha-D-glucosamine 1-phosphate + CoA + H(+). The enzyme catalyses N-acetyl-alpha-D-glucosamine 1-phosphate + UTP + H(+) = UDP-N-acetyl-alpha-D-glucosamine + diphosphate. It functions in the pathway nucleotide-sugar biosynthesis; UDP-N-acetyl-alpha-D-glucosamine biosynthesis; N-acetyl-alpha-D-glucosamine 1-phosphate from alpha-D-glucosamine 6-phosphate (route II): step 2/2. The protein operates within nucleotide-sugar biosynthesis; UDP-N-acetyl-alpha-D-glucosamine biosynthesis; UDP-N-acetyl-alpha-D-glucosamine from N-acetyl-alpha-D-glucosamine 1-phosphate: step 1/1. It participates in bacterial outer membrane biogenesis; LPS lipid A biosynthesis. Catalyzes the last two sequential reactions in the de novo biosynthetic pathway for UDP-N-acetylglucosamine (UDP-GlcNAc). The C-terminal domain catalyzes the transfer of acetyl group from acetyl coenzyme A to glucosamine-1-phosphate (GlcN-1-P) to produce N-acetylglucosamine-1-phosphate (GlcNAc-1-P), which is converted into UDP-GlcNAc by the transfer of uridine 5-monophosphate (from uridine 5-triphosphate), a reaction catalyzed by the N-terminal domain. The protein is Bifunctional protein GlmU of Salmonella choleraesuis (strain SC-B67).